A 184-amino-acid polypeptide reads, in one-letter code: Chaperone protein YcdY (184 aa).

It belongs to the TorD/DmsD family. Interacts with YcdX.

Acts as a chaperone that increases YcdX activity, maybe by facilitating the correct insertion of the zinc ions into the catalytic site of YcdX. Involved in the swarming motility process. The protein is Chaperone protein YcdY (ycdY) of Escherichia coli (strain K12).